Reading from the N-terminus, the 151-residue chain is MRGILDDIDKKIIEILQKDGKVPLREISKITGLAESTIHERIKRLRESGVIKKFTAVVNPEALGYNILAFILIKVKAGKYSEVASKLVKYPEIVEVYETTGDYDMVVKIRTKNSEELNNFLDMVGSIEGVEGTHTMIVLKVHKETTELPVK.

Positions 5 to 66 constitute an HTH asnC-type domain; that stretch reads LDDIDKKIIE…VVNPEALGYN (62 aa). A DNA-binding region (H-T-H motif) is located at residues 24–43; sequence LREISKITGLAESTIHERIK. 98–104 is a binding site for L-arginine; the sequence is ETTGDYD. Residues asparagine 118, aspartate 122, and 133–135 contribute to the L-lysine site; that span reads THT. L-arginine contacts are provided by residues aspartate 122 and 133–135; that span reads THT.

Homodimer. Binds DNA as a dimer and an octamer.

Its activity is regulated as follows. In the famine mode, FL11 forms dimers and acts as a repressor, leading to growth arrest. In the feast mode, in the presence of high concentrations of lysine or arginine, four dimers assemble into an octamer and cover the fl11 and lysine biosynthesis promoters. This leads to the inhibition of fl11 expression and lysine biosynthesis, decrease of the FL11 concentration in the cell, derepression of the target genes and activation of the metabolism. Its function is as follows. DNA-binding protein involved in the repression of transcription of a large number of genes, thereby arresting growth, in response to environmental changes. In Pyrococcus furiosus (strain ATCC 43587 / DSM 3638 / JCM 8422 / Vc1), this protein is HTH-type transcriptional regulator FL11.